The sequence spans 466 residues: Histidine--tRNA ligase (466 aa).

Belongs to the class-II aminoacyl-tRNA synthetase family. Homodimer.

The protein localises to the cytoplasm. The enzyme catalyses tRNA(His) + L-histidine + ATP = L-histidyl-tRNA(His) + AMP + diphosphate + H(+). The chain is Histidine--tRNA ligase from Xylella fastidiosa (strain M23).